Consider the following 320-residue polypeptide: 1,5-anhydro-D-fructose reductase (320 aa).

The Proton donor role is filled by tyrosine 40. Residue histidine 102 coordinates substrate. NADP(+) is bound by residues glutamine 194 and isoleucine 265–asparagine 277.

Belongs to the aldo/keto reductase family. As to quaternary structure, monomer.

Its subcellular location is the cytoplasm. The catalysed reaction is 1,5-anhydro-D-glucitol + NADP(+) = 1,5-anhydro-D-fructose + NADPH + H(+). Inhibited by p-chloromercuribenzoic acid and alkyliodines. Catalyzes the NADPH-dependent reduction of 1,5-anhydro-D-fructose (AF) to 1,5-anhydro-D-glucitol. The sequence is that of 1,5-anhydro-D-fructose reductase (AKR1E2) from Macaca fascicularis (Crab-eating macaque).